Here is a 282-residue protein sequence, read N- to C-terminus: tRNA N(3)-cytidine methyltransferase METTL6 (282 aa).

S-adenosyl-L-methionine is bound by residues tryptophan 45, tyrosine 49, glycine 87, aspartate 110, aspartate 136, leucine 137, and isoleucine 157.

Belongs to the methyltransferase superfamily. METL family. In terms of assembly, monomer. Interacts with SARS1/SerRS; interaction is mediated via tRNA(Ser) and is required for N(3)-methylcytidine methylation.

The protein localises to the cytoplasm. It localises to the nucleus. It carries out the reaction cytidine(32) in tRNA(Ser) + S-adenosyl-L-methionine = N(3)-methylcytidine(32) in tRNA(Ser) + S-adenosyl-L-homocysteine + H(+). S-adenosyl-L-methionine-dependent methyltransferase that mediates N(3)-methylcytidine modification of residue 32 of the tRNA anticodon loop of tRNA(Ser), including tRNA(Ser)(UGA) and tRNA(Ser)(GCU). Interaction with SARS1/SerRS is required for N(3)-methylcytidine methylation. This Mus musculus (Mouse) protein is tRNA N(3)-cytidine methyltransferase METTL6.